We begin with the raw amino-acid sequence, 122 residues long: Large ribosomal subunit protein uL14 (122 aa).

This sequence belongs to the universal ribosomal protein uL14 family. Part of the 50S ribosomal subunit. Forms a cluster with proteins L3 and L19. In the 70S ribosome, L14 and L19 interact and together make contacts with the 16S rRNA in bridges B5 and B8.

Binds to 23S rRNA. Forms part of two intersubunit bridges in the 70S ribosome. In Jannaschia sp. (strain CCS1), this protein is Large ribosomal subunit protein uL14.